Consider the following 291-residue polypeptide: ATP synthase gamma chain 2 (291 aa).

The tract at residues 187–208 is disordered; that stretch reads LLPHPDKDESQDSKPNDATSRW. Over residues 190-201 the composition is skewed to basic and acidic residues; that stretch reads HPDKDESQDSKP.

Belongs to the ATPase gamma chain family. In terms of assembly, F-type ATPases have 2 components, CF(1) - the catalytic core - and CF(0) - the membrane proton channel. CF(1) has five subunits: alpha(3), beta(3), gamma(1), delta(1), epsilon(1). CF(0) has three main subunits: a, b and c.

The protein resides in the cell inner membrane. Produces ATP from ADP in the presence of a proton gradient across the membrane. The gamma chain is believed to be important in regulating ATPase activity and the flow of protons through the CF(0) complex. This chain is ATP synthase gamma chain 2, found in Photobacterium profundum (strain SS9).